A 179-amino-acid chain; its full sequence is uncharacterized protein (179 aa).

It is found in the plastid. Its subcellular location is the cyanelle. This is an uncharacterized protein from Cyanophora paradoxa.